Reading from the N-terminus, the 610-residue chain is Putative sensor histidine kinase NtrY-like (610 aa).

The next 4 membrane-spanning stretches (helical) occupy residues I18–I38, K49–T69, I92–A112, and I292–V312. Positions A314–R368 constitute an HAMP domain. The Histidine kinase domain maps to K385–E596. At H388 the chain carries Phosphohistidine; by autocatalysis.

Its subcellular location is the cell membrane. It catalyses the reaction ATP + protein L-histidine = ADP + protein N-phospho-L-histidine.. Its function is as follows. Member of the two-component regulatory system RBE_0470/RBE_0312. In Rickettsia bellii (strain RML369-C), this protein is Putative sensor histidine kinase NtrY-like.